Consider the following 606-residue polypeptide: Elongation factor 4 (606 aa).

Residues 7–189 (SRIRNFCIIA…AVVDRVPPPK (183 aa)) enclose the tr-type G domain. Residues 19–24 (DHGKST) and 136–139 (NKID) contribute to the GTP site.

This sequence belongs to the TRAFAC class translation factor GTPase superfamily. Classic translation factor GTPase family. LepA subfamily.

It is found in the cell inner membrane. It carries out the reaction GTP + H2O = GDP + phosphate + H(+). Functionally, required for accurate and efficient protein synthesis under certain stress conditions. May act as a fidelity factor of the translation reaction, by catalyzing a one-codon backward translocation of tRNAs on improperly translocated ribosomes. Back-translocation proceeds from a post-translocation (POST) complex to a pre-translocation (PRE) complex, thus giving elongation factor G a second chance to translocate the tRNAs correctly. Binds to ribosomes in a GTP-dependent manner. The chain is Elongation factor 4 from Synechococcus sp. (strain CC9605).